The sequence spans 466 residues: Ribulose bisphosphate carboxylase large chain (466 aa).

The residue at position 5 (lysine 5) is an N6,N6,N6-trimethyllysine. 2 residues coordinate substrate: asparagine 114 and threonine 164. Lysine 166 acts as the Proton acceptor in catalysis. A substrate-binding site is contributed by lysine 168. Residues lysine 192, aspartate 194, and glutamate 195 each contribute to the Mg(2+) site. Lysine 192 is subject to N6-carboxylysine. Histidine 285 serves as the catalytic Proton acceptor. Arginine 286, histidine 318, and serine 370 together coordinate substrate.

The protein belongs to the RuBisCO large chain family. Type I subfamily. As to quaternary structure, heterohexadecamer of 8 large chains and 8 small chains; disulfide-linked. The disulfide link is formed within the large subunit homodimers. Requires Mg(2+) as cofactor. Post-translationally, the disulfide bond which can form in the large chain dimeric partners within the hexadecamer appears to be associated with oxidative stress and protein turnover.

Its subcellular location is the plastid. The protein localises to the chloroplast. It catalyses the reaction 2 (2R)-3-phosphoglycerate + 2 H(+) = D-ribulose 1,5-bisphosphate + CO2 + H2O. The enzyme catalyses D-ribulose 1,5-bisphosphate + O2 = 2-phosphoglycolate + (2R)-3-phosphoglycerate + 2 H(+). Functionally, ruBisCO catalyzes two reactions: the carboxylation of D-ribulose 1,5-bisphosphate, the primary event in carbon dioxide fixation, as well as the oxidative fragmentation of the pentose substrate in the photorespiration process. Both reactions occur simultaneously and in competition at the same active site. The polypeptide is Ribulose bisphosphate carboxylase large chain (Cucurbita pepo (Vegetable marrow)).